The chain runs to 171 residues: Transcription factor E (171 aa).

The 87-residue stretch at 5–91 (DNKAVRGYIQ…LWKLDLDNSV (87 aa)) folds into the HTH TFE/IIEalpha-type domain.

It belongs to the TFE family. As to quaternary structure, monomer. Interaction with RNA polymerase subunits RpoF and RpoE is necessary for Tfe stimulatory transcription activity. Able to interact with Tbp and RNA polymerase in the absence of DNA promoter. Interacts both with the preinitiation and elongation complexes.

Transcription factor that plays a role in the activation of archaeal genes transcribed by RNA polymerase. Facilitates transcription initiation by enhancing TATA-box recognition by TATA-box-binding protein (Tbp), and transcription factor B (Tfb) and RNA polymerase recruitment. Not absolutely required for transcription in vitro, but particularly important in cases where Tbp or Tfb function is not optimal. It dynamically alters the nucleic acid-binding properties of RNA polymerases by stabilizing the initiation complex and destabilizing elongation complexes. Seems to translocate with the RNA polymerase following initiation and acts by binding to the non template strand of the transcription bubble in elongation complexes. The chain is Transcription factor E from Methanocella arvoryzae (strain DSM 22066 / NBRC 105507 / MRE50).